We begin with the raw amino-acid sequence, 156 residues long: Transcription elongation factor GreA (156 aa).

A coiled-coil region spans residues 46 to 66 (AEYHAAREKQSFVEGRIKELE).

It belongs to the GreA/GreB family.

Functionally, necessary for efficient RNA polymerase transcription elongation past template-encoded arresting sites. The arresting sites in DNA have the property of trapping a certain fraction of elongating RNA polymerases that pass through, resulting in locked ternary complexes. Cleavage of the nascent transcript by cleavage factors such as GreA or GreB allows the resumption of elongation from the new 3'terminus. GreA releases sequences of 2 to 3 nucleotides. This is Transcription elongation factor GreA from Paracoccus denitrificans (strain Pd 1222).